We begin with the raw amino-acid sequence, 224 residues long: MTGGATGALPRTMKEGWIVYARSTTIQAQSECIDTGIAHVRDVVMPALQGMDGCIGVSLLVDRQSGRCIATSAWETAEAMHASREQVTPIRDRCAEMFGGTPAVEEWEIAAMHRDHRSAEGACVRATWVKVPADQVDQGIEYYKSSVLPQIEGLDGFCSASLLVDRTSGRAVSSATFDSFDAMERNRDQSNALKATSLREAGGEELDECEFELALAHLRVPELV.

To M.tuberculosis Rv2558.

This is an uncharacterized protein from Mycobacterium tuberculosis (strain CDC 1551 / Oshkosh).